Here is a 507-residue protein sequence, read N- to C-terminus: ATP synthase subunit alpha, mitochondrial (507 aa).

Position 171-178 (171-178) interacts with ATP; that stretch reads GDRQTGKT.

This sequence belongs to the ATPase alpha/beta chains family. F-type ATPases have 2 components, CF(1) - the catalytic core - and CF(0) - the membrane proton channel. CF(1) has five subunits: alpha(3), beta(3), gamma(1), delta(1), epsilon(1). CF(0) has three main subunits: a, b and c.

The protein localises to the mitochondrion. Its subcellular location is the mitochondrion inner membrane. In terms of biological role, mitochondrial membrane ATP synthase (F(1)F(0) ATP synthase or Complex V) produces ATP from ADP in the presence of a proton gradient across the membrane which is generated by electron transport complexes of the respiratory chain. F-type ATPases consist of two structural domains, F(1) - containing the extramembraneous catalytic core, and F(0) - containing the membrane proton channel, linked together by a central stalk and a peripheral stalk. During catalysis, ATP synthesis in the catalytic domain of F(1) is coupled via a rotary mechanism of the central stalk subunits to proton translocation. Subunits alpha and beta form the catalytic core in F(1). Rotation of the central stalk against the surrounding alpha(3)beta(3) subunits leads to hydrolysis of ATP in three separate catalytic sites on the beta subunits. Subunit alpha does not bear the catalytic high-affinity ATP-binding sites. This is ATP synthase subunit alpha, mitochondrial (ATPA) from Pisum sativum (Garden pea).